A 62-amino-acid chain; its full sequence is Large ribosomal subunit protein bL28 (62 aa).

Belongs to the bacterial ribosomal protein bL28 family.

The sequence is that of Large ribosomal subunit protein bL28 from Thermoanaerobacter sp. (strain X514).